Reading from the N-terminus, the 333-residue chain is Adenosine deaminase (333 aa).

Zn(2+)-binding residues include His12 and His14. Residues His14, Asp16, and Gly170 each coordinate substrate. His197 is a binding site for Zn(2+). Catalysis depends on Glu200, which acts as the Proton donor. Asp278 serves as a coordination point for Zn(2+). Residue Asp279 coordinates substrate.

Belongs to the metallo-dependent hydrolases superfamily. Adenosine and AMP deaminases family. Adenosine deaminase subfamily. Zn(2+) is required as a cofactor.

It carries out the reaction adenosine + H2O + H(+) = inosine + NH4(+). It catalyses the reaction 2'-deoxyadenosine + H2O + H(+) = 2'-deoxyinosine + NH4(+). Functionally, catalyzes the hydrolytic deamination of adenosine and 2-deoxyadenosine. The sequence is that of Adenosine deaminase from Escherichia coli (strain SMS-3-5 / SECEC).